The sequence spans 349 residues: Protein-glutamate methylesterase/protein-glutamine glutaminase (349 aa).

One can recognise a Response regulatory domain in the interval Arg-5–Met-122. Asp-56 is modified (4-aspartylphosphate). Residues Leu-152–Gly-344 form the CheB-type methylesterase domain. Active-site residues include Ser-164, His-190, and Asp-286.

It belongs to the CheB family. In terms of processing, phosphorylated by CheA. Phosphorylation of the N-terminal regulatory domain activates the methylesterase activity.

It localises to the cytoplasm. The enzyme catalyses [protein]-L-glutamate 5-O-methyl ester + H2O = L-glutamyl-[protein] + methanol + H(+). It carries out the reaction L-glutaminyl-[protein] + H2O = L-glutamyl-[protein] + NH4(+). Functionally, involved in chemotaxis. Part of a chemotaxis signal transduction system that modulates chemotaxis in response to various stimuli. Catalyzes the demethylation of specific methylglutamate residues introduced into the chemoreceptors (methyl-accepting chemotaxis proteins or MCP) by CheR. Also mediates the irreversible deamidation of specific glutamine residues to glutamic acid. The polypeptide is Protein-glutamate methylesterase/protein-glutamine glutaminase (Shigella flexneri).